A 99-amino-acid chain; its full sequence is NADH-quinone oxidoreductase subunit K (99 aa).

3 helical membrane passes run 3–23 (PINY…GVLL), 28–48 (IVMF…FVTF), and 59–79 (MIAF…LAII).

It belongs to the complex I subunit 4L family. In terms of assembly, NDH-1 is composed of 14 different subunits. Subunits NuoA, H, J, K, L, M, N constitute the membrane sector of the complex.

The protein resides in the cell membrane. It carries out the reaction a quinone + NADH + 5 H(+)(in) = a quinol + NAD(+) + 4 H(+)(out). In terms of biological role, NDH-1 shuttles electrons from NADH, via FMN and iron-sulfur (Fe-S) centers, to quinones in the respiratory chain. The immediate electron acceptor for the enzyme in this species is believed to be a menaquinone. Couples the redox reaction to proton translocation (for every two electrons transferred, four hydrogen ions are translocated across the cytoplasmic membrane), and thus conserves the redox energy in a proton gradient. This chain is NADH-quinone oxidoreductase subunit K, found in Mycobacterium avium (strain 104).